Consider the following 232-residue polypeptide: Fibrillarin-like rRNA/tRNA 2'-O-methyltransferase (232 aa).

S-adenosyl-L-methionine is bound by residues 87-88 (TT), 105-106 (EF), 130-131 (DA), and 150-153 (DVAQ).

This sequence belongs to the methyltransferase superfamily. Fibrillarin family. As to quaternary structure, interacts with nop5. Component of box C/D small ribonucleoprotein (sRNP) particles that contain rpl7ae, FlpA and nop5, plus a guide RNA.

In terms of biological role, involved in pre-rRNA and tRNA processing. Utilizes the methyl donor S-adenosyl-L-methionine to catalyze the site-specific 2'-hydroxyl methylation of ribose moieties in rRNA and tRNA. Site specificity is provided by a guide RNA that base pairs with the substrate. Methylation occurs at a characteristic distance from the sequence involved in base pairing with the guide RNA. This chain is Fibrillarin-like rRNA/tRNA 2'-O-methyltransferase, found in Methanococcus maripaludis (strain C7 / ATCC BAA-1331).